We begin with the raw amino-acid sequence, 96 residues long: Antitoxin TacA3 (96 aa).

Positions 61–96 are neutralization domain; sequence YLTERDTKMIMEILDNPPAPNEKLLAAAFALPDMKK.

It belongs to the TacA antitoxin family. Forms a complex with cognate toxin TacT3. Forms a 4:2 antitoxin:toxin complex with cognate toxin TacT3. Forms a 4:4 antitoxin:toxin complex with promoter DNA, where 2 TacT3 dimers bridge 2 TacA3 dimers. Only TacA3 contacts promoter DNA.

Its function is as follows. Antitoxin component of a type II toxin-antitoxin (TA) system. Counteracts the toxic effect of cognate toxin TacT3, but not TacT1 or TacT2. Plays a role in persister cell formation. In terms of biological role, the TacA3-TacT3 complex both represses and derepresses expression of its own operon. The hexameric 4:2 TacA3-TacT3 complex binds promoter DNA and represses its transcription; both subunits are required. The octomeric 4:4 TacA3-TacT3 complex derepresses the operon. The shift from hexameric to octomeric complex probably alters DNA-binding, leading to dissociation from the operator DNA and derepression. Does not bind the promoter of the TacA1-TacT1 operon. The chain is Antitoxin TacA3 from Salmonella typhimurium (strain 14028s / SGSC 2262).